The chain runs to 203 residues: Recombination protein RecR (203 aa).

The C4-type zinc finger occupies 56–71; that stretch reads CAVCGNVSDNERCRIC. In terms of domain architecture, Toprim spans 79–179; sequence SVVCIVEEPK…TVTRIASGLP (101 aa).

Belongs to the RecR family.

Its function is as follows. May play a role in DNA repair. It seems to be involved in an RecBC-independent recombinational process of DNA repair. It may act with RecF and RecO. The polypeptide is Recombination protein RecR (Mycobacterium bovis (strain ATCC BAA-935 / AF2122/97)).